Consider the following 34-residue polypeptide: Mu-theraphotoxin-CCy1a (34 aa).

Intrachain disulfides connect C3-C18, C10-C23, and C17-C30.

This sequence belongs to the neurotoxin 10 (Hwtx-1) family. 14 (Hntx-1) subfamily. Expressed by the venom gland.

The protein localises to the secreted. Its function is as follows. Voltage-gated sodium channel Nav1.7/SCN9A inhibitor. The chain is Mu-theraphotoxin-CCy1a from Chromatopelma cyaneopubescens (Greenbottle blue tarantula).